Here is a 265-residue protein sequence, read N- to C-terminus: Indole-3-glycerol phosphate synthase (265 aa).

This sequence belongs to the TrpC family.

It carries out the reaction 1-(2-carboxyphenylamino)-1-deoxy-D-ribulose 5-phosphate + H(+) = (1S,2R)-1-C-(indol-3-yl)glycerol 3-phosphate + CO2 + H2O. It participates in amino-acid biosynthesis; L-tryptophan biosynthesis; L-tryptophan from chorismate: step 4/5. This chain is Indole-3-glycerol phosphate synthase, found in Hyphomonas neptunium (strain ATCC 15444).